Consider the following 189-residue polypeptide: Hypoxanthine/guanine phosphoribosyltransferase (189 aa).

It belongs to the purine/pyrimidine phosphoribosyltransferase family. Archaeal HPRT subfamily. Homodimer.

The protein localises to the cytoplasm. The enzyme catalyses IMP + diphosphate = hypoxanthine + 5-phospho-alpha-D-ribose 1-diphosphate. The catalysed reaction is GMP + diphosphate = guanine + 5-phospho-alpha-D-ribose 1-diphosphate. It functions in the pathway purine metabolism; IMP biosynthesis via salvage pathway; IMP from hypoxanthine: step 1/1. Catalyzes a salvage reaction resulting in the formation of IMP that is energically less costly than de novo synthesis. The polypeptide is Hypoxanthine/guanine phosphoribosyltransferase (hpt) (Methanosarcina acetivorans (strain ATCC 35395 / DSM 2834 / JCM 12185 / C2A)).